Reading from the N-terminus, the 289-residue chain is N-acetylmuramoyl-L-alanine amidase AmiA (289 aa).

The tat-type signal signal peptide spans 1–34; it reads MSTFKLLKTLTSRRQVLKTGLAALTLSGMSHAVA. The segment at 36-61 is disordered; it reads EETLKTSNGHSKPKTKKTGSKRLVML. Positions 46-55 are enriched in basic residues; it reads SKPKTKKTGS. The MurNAc-LAA domain maps to 59–273; it reads VMLDPGHGGI…IATAIANGII (215 aa).

The protein belongs to the N-acetylmuramoyl-L-alanine amidase 3 family. In terms of processing, predicted to be exported by the Tat system. The position of the signal peptide cleavage has not been experimentally proven.

The protein resides in the periplasm. It catalyses the reaction Hydrolyzes the link between N-acetylmuramoyl residues and L-amino acid residues in certain cell-wall glycopeptides.. Its function is as follows. Cell-wall hydrolase involved in septum cleavage during cell division. This is N-acetylmuramoyl-L-alanine amidase AmiA (amiA) from Salmonella typhimurium (strain LT2 / SGSC1412 / ATCC 700720).